The sequence spans 185 residues: Nodulin-20 (185 aa).

The N-terminal stretch at 1–17 (MRVVLITLFLFIGAAVA) is a signal peptide.

It belongs to the nodulin 20 family.

Its subcellular location is the symbiosome. The protein localises to the peribacteroid membrane. It localises to the peribacteroid space. In Glycine max (Soybean), this protein is Nodulin-20.